The primary structure comprises 277 residues: Ribosomal RNA small subunit methyltransferase A (277 aa).

Positions 23, 25, 50, 75, 98, and 121 each coordinate S-adenosyl-L-methionine.

It belongs to the class I-like SAM-binding methyltransferase superfamily. rRNA adenine N(6)-methyltransferase family. RsmA subfamily.

The protein localises to the cytoplasm. It carries out the reaction adenosine(1518)/adenosine(1519) in 16S rRNA + 4 S-adenosyl-L-methionine = N(6)-dimethyladenosine(1518)/N(6)-dimethyladenosine(1519) in 16S rRNA + 4 S-adenosyl-L-homocysteine + 4 H(+). In terms of biological role, specifically dimethylates two adjacent adenosines (A1518 and A1519) in the loop of a conserved hairpin near the 3'-end of 16S rRNA in the 30S particle. May play a critical role in biogenesis of 30S subunits. This Paraburkholderia xenovorans (strain LB400) protein is Ribosomal RNA small subunit methyltransferase A.